A 372-amino-acid polypeptide reads, in one-letter code: UDP-2-acetamido-2,6-beta-L-arabino-hexul-4-ose reductase (372 aa).

NAD(+) contacts are provided by residues 7–30 (GANGFVGRNLCAHLAERGGIEVVP), Leu53, Tyr103, and Lys107. Catalysis depends on Tyr103, which acts as the Proton acceptor. Substrate contacts are provided by residues Asn132 and 279–282 (HPGV).

It belongs to the NAD(P)-dependent epimerase/dehydratase family. As to quaternary structure, homodimer.

It carries out the reaction UDP-2-acetamido-2,6-dideoxy-beta-L-arabino-hex-4-ulose + NADH + H(+) = UDP-2-acetamido-2,6-dideoxy-beta-L-talose + NAD(+). The enzyme catalyses UDP-2-acetamido-2,6-dideoxy-beta-L-arabino-hex-4-ulose + NADPH + H(+) = UDP-2-acetamido-2,6-dideoxy-beta-L-talose + NADP(+). It participates in bacterial outer membrane biogenesis; LPS O-antigen biosynthesis. In terms of biological role, bifunctional enzyme that mediates C-3 epimerization of the second intermediate followed by reduction at C-4 during serogroup O11 O-antigen biosynthesis, thus catalyzing the conversion of UDP-N-acetyl-D-glucosamine to precursors for the biosynthesis of O antigen. The polypeptide is UDP-2-acetamido-2,6-beta-L-arabino-hexul-4-ose reductase (Pseudomonas aeruginosa (strain ATCC 29260 / BCRC 12902 / CIP 102967 / NCIMB 11965 / PA103)).